Reading from the N-terminus, the 315-residue chain is ATP synthase gamma chain (315 aa).

Belongs to the ATPase gamma chain family. F-type ATPases have 2 components, CF(1) - the catalytic core - and CF(0) - the membrane proton channel. CF(1) has five subunits: alpha(3), beta(3), gamma(1), delta(1), epsilon(1). CF(0) has three main subunits: a, b and c.

The protein resides in the cellular thylakoid membrane. In terms of biological role, produces ATP from ADP in the presence of a proton gradient across the membrane. The gamma chain is believed to be important in regulating ATPase activity and the flow of protons through the CF(0) complex. This Cyanothece sp. (strain PCC 7425 / ATCC 29141) protein is ATP synthase gamma chain.